Consider the following 673-residue polypeptide: UvrABC system protein B (673 aa).

The region spanning 26–183 is the Helicase ATP-binding domain; that stretch reads EGLEDGLAHQ…RRLAELQYAR (158 aa). Residue 39–46 coordinates ATP; the sequence is GVTGSGKT. Residues 92 to 115 carry the Beta-hairpin motif; that stretch reads YYDYYQPEAYVPSSDTFIEKDASV. One can recognise a Helicase C-terminal domain in the interval 431–597; it reads QVDDLLSEIR…GLNKKVVDIL (167 aa). Residues 633-668 enclose the UVR domain; the sequence is QQKIHELEGLMMQHAQNLEFEEAAQVRDQLHQLRQL.

It belongs to the UvrB family. As to quaternary structure, forms a heterotetramer with UvrA during the search for lesions. Interacts with UvrC in an incision complex.

The protein localises to the cytoplasm. Its function is as follows. The UvrABC repair system catalyzes the recognition and processing of DNA lesions. A damage recognition complex composed of 2 UvrA and 2 UvrB subunits scans DNA for abnormalities. Upon binding of the UvrA(2)B(2) complex to a putative damaged site, the DNA wraps around one UvrB monomer. DNA wrap is dependent on ATP binding by UvrB and probably causes local melting of the DNA helix, facilitating insertion of UvrB beta-hairpin between the DNA strands. Then UvrB probes one DNA strand for the presence of a lesion. If a lesion is found the UvrA subunits dissociate and the UvrB-DNA preincision complex is formed. This complex is subsequently bound by UvrC and the second UvrB is released. If no lesion is found, the DNA wraps around the other UvrB subunit that will check the other stand for damage. This chain is UvrABC system protein B, found in Enterobacter sp. (strain 638).